The chain runs to 747 residues: Pseudouridine-metabolizing bifunctional protein C1861.05 (747 aa).

The pseudouridine-5'-phosphate glycosidase stretch occupies residues 1 to 379; it reads MLIVMNRGCR…KVSDKGVSSS (379 aa). E61 acts as the Proton donor; for PsiMP glycosidase activity in catalysis. Substrate-binding residues include K123 and V143. A Mn(2+)-binding site is contributed by D175. 177-179 contributes to the substrate binding site; the sequence is SAD. The active-site Nucleophile; for PsiMP glycosidase activity is the K196. Residues 380 to 747 form a pseudouridine kinase region; sequence KKKITETTSK…VNPEIKTLLK (368 aa).

In the N-terminal section; belongs to the pseudouridine-5'-phosphate glycosidase family. It in the C-terminal section; belongs to the carbohydrate kinase PfkB family. It depends on Mn(2+) as a cofactor.

It is found in the cytoplasm. The enzyme catalyses D-ribose 5-phosphate + uracil = psi-UMP + H2O. It catalyses the reaction pseudouridine + ATP = psi-UMP + ADP + H(+). Its function is as follows. Bifunctional enzyme that catalyzes the phosphorylation of pseudouridine to pseudouridine 5'-phosphate (PsiMP), and the reversible cleavage of pseudouridine 5'-phosphate to ribose 5-phosphate and uracil. Is involved in a pseudouridine degradation pathway. The sequence is that of Pseudouridine-metabolizing bifunctional protein C1861.05 from Schizosaccharomyces pombe (strain 972 / ATCC 24843) (Fission yeast).